The primary structure comprises 192 residues: INO80 complex subunit C (192 aa).

The interval 1–44 is disordered; the sequence is MAAQIPIVATTSTPGIVRNSKKRPASPSHNGSSGGGYGASKKKK.

As to quaternary structure, component of the chromatin remodeling INO80 complex; specifically part of a complex module associated with the helicase ATP-binding and the helicase C-terminal domain of INO80. Component of some MLL1/MLL complex, at least composed of the core components KMT2A/MLL1, ASH2L, HCFC1/HCF1, WDR5 and RBBP5, as well as the facultative components BACC1, CHD8, E2F6, HSP70, INO80C, KANSL1, LAS1L, MAX, MCRS1, MGA, MYST1/MOF, PELP1, PHF20, PRP31, RING2, RUVB1/TIP49A, RUVB2/TIP49B, SENP3, TAF1, TAF4, TAF6, TAF7, TAF9 and TEX10.

It is found in the nucleus. Its function is as follows. Proposed core component of the chromatin remodeling INO80 complex which is involved in transcriptional regulation, DNA replication and probably DNA repair. The polypeptide is INO80 complex subunit C (INO80C) (Homo sapiens (Human)).